We begin with the raw amino-acid sequence, 61 residues long: Temporin-1Tb (61 aa).

An N-terminal signal peptide occupies residues 1 to 22 (MFTLKKSLLLLFFLGTINLSLC). The propeptide occupies 23 to 44 (EEERNAEEERRDEPDERDVQVE). L59 bears the Leucine amide mark.

It belongs to the frog skin active peptide (FSAP) family. Temporin subfamily. As to quaternary structure, homo-oligomerizes in membranes as homodimers, homotrimers, or even homotetramers. Oligomerizes in presence of LPS. In Gram-positive bacterial mimetic membranes, the aggregation is weakly pronounced, and penetration proceeds more rapidly and is deeper than in Gram-negative bacterial mimetic membranes where aggregation is high. Homo-oligomerization is prevented by temporin-L. In terms of tissue distribution, expressed by the skin glands.

It is found in the secreted. It localises to the target cell membrane. The protein resides in the target cell. Its subcellular location is the target cell cytoplasm. Its function is as follows. Amphipathic alpha-helical antimicrobial peptide with potent activity against Gram-positive bacteria, weak activity against Gram-negative bacteria, and moderate activity against fungi. Mainly acts by causing membrane permeabilization, but is unable to forme pore-like openings. Is also able to penetrate eukaryotic cells (keratinocytes), and kill intracellular S.aureus (both wild-type and MRSA) without injuring host cells. Shows inhibitory effect on biofilm formation of Gram-positive bacteria, but not of Gram-negative bacteria. Shows antiviral activity against herpes simplex virus 1 (HSV-1) by disrupting the viral envelope. Also displays anti-leishmania activity by damaging parasite membrane. Does not show hemolytic activity. Acts synergistically with temporin-L that improves temporin-1Tb activity by preventing its self-association in lipopolysaccharides (LPS). In vitro, promotes cell migration and wound healing. The sequence is that of Temporin-1Tb from Rana temporaria (European common frog).